The primary structure comprises 450 residues: FAD-linked oxidoreductase ptmO (450 aa).

Residues 32-203 (PPELPYAIVR…TRFFIRTRPA (172 aa)) form the FAD-binding PCMH-type domain.

Belongs to the oxygen-dependent FAD-linked oxidoreductase family. FAD serves as cofactor.

Its pathway is secondary metabolite biosynthesis. FAD-linked oxidoreductase; part of the gene cluster that mediates the biosynthesis of the indole diterpenes penitrems. The geranylgeranyl diphosphate (GGPP) synthase ptmG catalyzes the first step in penitrem biosynthesis via conversion of farnesyl pyrophosphate and isopentyl pyrophosphate into geranylgeranyl pyrophosphate (GGPP). Condensation of indole-3-glycerol phosphate with GGPP by the prenyl transferase ptmC then forms 3-geranylgeranylindole (3-GGI). Epoxidation by the FAD-dependent monooxygenase ptmM leads to a epoxidized-GGI that is substrate of the terpene cyclase ptmB for cyclization to yield paspaline. Paspaline is subsequently converted to 13-desoxypaxilline by the cytochrome P450 monooxygenase ptmP, the latter being then converted to paxilline by the cytochrome P450 monooxygenase ptmQ. Paxilline is converted to beta-paxitriol via C-10 ketoreduction by the short-chain dehydrogenase ptmH which can be monoprenylated at the C-20 by the indole diterpene prenyltransferase ptmD. A two-step elimination (acetylation and elimination) process performed by the O-acetyltransferase ptmV and ptmI leads to the production of the prenylated form of penijanthine. The FAD-linked oxidoreductase ptmO then converts the prenylated form of penijanthine into PC-M5 which is in turn transformed into PC-M4 by the aromatic dimethylallyltransferase ptmE. Five sequential oxidative transformations performed by the cytochrome P450 monooxygenases ptmK, ptmU, ptmL, ptmN and ptmJ yield the various penitrem compounds. PtmK, ptmU and ptmM are involved in the formation of the key bicyclic ring of penitrem C via the formation of the intermediates secopenitrem D and penitrem D. PtmL catalyzes the epoxidation of penitrem D and C to yield penitrem B and F, respectively. PtmJ catalyzes the last benzylic hydroxylation to convert penitrem B to prenitrem E and penitrem F to penitrem A. This Penicillium ochrochloron protein is FAD-linked oxidoreductase ptmO.